Consider the following 654-residue polypeptide: Macrolide export ATP-binding/permease protein MacB (654 aa).

One can recognise an ABC transporter domain in the interval 6–244 (LKVEDLTRRF…EQAAKTPSAS (239 aa)). 42–49 (GASGSGKS) serves as a coordination point for ATP. The next 4 membrane-spanning stretches (helical) occupy residues 280-300 (FLTM…VALG), 529-549 (LLIS…VMNI), 584-604 (LVCL…GFAF), and 619-639 (SIIW…FLPA).

Belongs to the ABC transporter superfamily. Macrolide exporter (TC 3.A.1.122) family. Homodimer. Part of the tripartite efflux system MacAB-TolC, which is composed of an inner membrane transporter, MacB, a periplasmic membrane fusion protein, MacA, and an outer membrane component, TolC. The complex forms a large protein conduit and can translocate molecules across both the inner and outer membranes. Interacts with MacA.

It localises to the cell inner membrane. In terms of biological role, part of the tripartite efflux system MacAB-TolC. MacB is a non-canonical ABC transporter that contains transmembrane domains (TMD), which form a pore in the inner membrane, and an ATP-binding domain (NBD), which is responsible for energy generation. Confers resistance against macrolides. This Vibrio parahaemolyticus serotype O3:K6 (strain RIMD 2210633) protein is Macrolide export ATP-binding/permease protein MacB.